The following is a 765-amino-acid chain: FHF complex subunit HOOK interacting protein 2A (765 aa).

Composition is skewed to polar residues over residues Leu-200–Gln-209 and Asn-538–Pro-550. 2 disordered regions span residues Leu-200–Asp-234 and Asn-538–Lys-562.

The protein belongs to the FHIP family.

Its function is as follows. May be required for proper functioning of the nervous system. This is FHF complex subunit HOOK interacting protein 2A (FHIP2A) from Bos taurus (Bovine).